A 292-amino-acid chain; its full sequence is Glycine--tRNA ligase alpha subunit (292 aa).

It belongs to the class-II aminoacyl-tRNA synthetase family. As to quaternary structure, tetramer of two alpha and two beta subunits.

The protein resides in the cytoplasm. It carries out the reaction tRNA(Gly) + glycine + ATP = glycyl-tRNA(Gly) + AMP + diphosphate. This chain is Glycine--tRNA ligase alpha subunit, found in Syntrophus aciditrophicus (strain SB).